The following is a 196-amino-acid chain: Large ribosomal subunit protein bL9 (196 aa).

The segment at 174 to 196 (QAAADLLEGGAGQQASEYTEAQA) is disordered. The segment covering 186 to 196 (QQASEYTEAQA) has biased composition (polar residues).

Belongs to the bacterial ribosomal protein bL9 family.

Functionally, binds to the 23S rRNA. The sequence is that of Large ribosomal subunit protein bL9 from Phenylobacterium zucineum (strain HLK1).